A 109-amino-acid chain; its full sequence is Large ribosomal subunit protein P2 (109 aa).

Residues 63–109 (ASVPSGGAGGASGGAAAAGGAAEEAKEEEKEEEKEESDEDMGFGLFD) form a disordered region. Residues 68-79 (GGAGGASGGAAA) show a composition bias toward gly residues. A compositionally biased stretch (acidic residues) spans 91–103 (EKEEEKEESDEDM). A Phosphoserine modification is found at S99.

This sequence belongs to the eukaryotic ribosomal protein P1/P2 family. In terms of assembly, P1 and P2 exist as dimers at the large ribosomal subunit.

Functionally, plays an important role in the elongation step of protein synthesis. The protein is Large ribosomal subunit protein P2 of Fusarium culmorum.